Here is a 599-residue protein sequence, read N- to C-terminus: ATP-binding cassette sub-family E member 1 (599 aa).

4Fe-4S ferredoxin-type domains are found at residues 7 to 37 and 46 to 75; these read RIAI…MGKL and KIAW…IVNL. A Glycyl lysine isopeptide (Lys-Gly) (interchain with G-Cter in ubiquitin) cross-link involves residue Lys-20. ABC transporter domains follow at residues 79–315 and 342–562; these read LEKE…FLDG and VKKM…LSQL. ATP contacts are provided by residues 110-117 and 379-386; these read GTNGIGKS and GENGTGKT. Residue Ser-417 is modified to Phosphoserine. Thr-550 is modified (phosphothreonine).

This sequence belongs to the ABC transporter superfamily. ABCE family. (Microbial infection) Interacts with Chandipura virus matrix protein. As to quaternary structure, interacts with PINK1. Interacts with CNOT4. Interacts with PELO. Probably heterodimerizes with RNASEL; this interaction inhibits RNASEL. In terms of assembly, (Microbial infection) Interacts with HIV-1 proteins Vif and Gag. (Microbial infection) Interacts with HIV-2 protein Gag. Ubiquitinated by CNOT4. Ubiquitination mediates the recruitment of autophagy receptors to the mitochondrial outer membrane and initiates mitophagy.

Its subcellular location is the cytoplasm. It is found in the mitochondrion. The catalysed reaction is GTP + H2O = GDP + phosphate + H(+). The enzyme catalyses ATP + H2O = ADP + phosphate + H(+). It catalyses the reaction CTP + H2O = CDP + phosphate + H(+). It carries out the reaction UTP + H2O = UDP + phosphate + H(+). Nucleoside-triphosphatase (NTPase) involved in ribosome recycling by mediating ribosome disassembly. Able to hydrolyze ATP, GTP, UTP and CTP. Splits ribosomes into free 60S subunits and tRNA- and mRNA-bound 40S subunits. Acts either after canonical termination facilitated by release factors (ETF1/eRF1) or after recognition of stalled and vacant ribosomes by mRNA surveillance factors (PELO/Pelota). Involved in the No-Go Decay (NGD) pathway: recruited to stalled ribosomes by the Pelota-HBS1L complex, and drives the disassembly of stalled ribosomes, followed by degradation of damaged mRNAs as part of the NGD pathway. Also plays a role in quality control of translation of mitochondrial outer membrane-localized mRNA. As part of the PINK1-regulated signaling, ubiquitinated by CNOT4 upon mitochondria damage; this modification generates polyubiquitin signals that recruit autophagy receptors to the mitochondrial outer membrane and initiate mitophagy. RNASEL-specific protein inhibitor which antagonizes the binding of 2-5A (5'-phosphorylated 2',5'-linked oligoadenylates) to RNASEL. Negative regulator of the anti-viral effect of the interferon-regulated 2-5A/RNASEL pathway. Functionally, (Microbial infection) May act as a chaperone for post-translational events during HIV-1 capsid assembly. Its function is as follows. (Microbial infection) Plays a role in the down-regulation of the 2-5A/RNASEL pathway during encephalomyocarditis virus (EMCV) and HIV-1 infections. This is ATP-binding cassette sub-family E member 1 (ABCE1) from Homo sapiens (Human).